Here is a 314-residue protein sequence, read N- to C-terminus: MQTASFKNGTLKIGTRGSKLALAQAYLTRRLLQEAHGLPEDAIEILPMSTAGDRIQDRPLSEVGGKGLFTEEIEQALKDGRIDIAVHSTKDMPTVLPEGLHLSVFLEREDPRDAFIGRSARRFMDLPQGATVGSSSLRRQALIRRLRPDIEVVMYRGNVDTRLRKLDAGEVDGTFLACAGLRRLGLADVITDLLDPSVFPPAPGQGAIGIESRIGDERIDVLLAPLAHRETQIALACERAFLGALDGSCRTPIAGLATVEGDRLSFRGMILTPDGRQAHEVTAEGVVSDAAALGTDAANRVRAMAGPHFFDGWQ.

Residue cysteine 249 is modified to S-(dipyrrolylmethanemethyl)cysteine.

It belongs to the HMBS family. In terms of assembly, monomer. Requires dipyrromethane as cofactor.

It carries out the reaction 4 porphobilinogen + H2O = hydroxymethylbilane + 4 NH4(+). Its pathway is porphyrin-containing compound metabolism; protoporphyrin-IX biosynthesis; coproporphyrinogen-III from 5-aminolevulinate: step 2/4. In terms of biological role, tetrapolymerization of the monopyrrole PBG into the hydroxymethylbilane pre-uroporphyrinogen in several discrete steps. In Brucella suis biovar 1 (strain 1330), this protein is Porphobilinogen deaminase.